The sequence spans 354 residues: Galactoside alpha-(1,2)-fucosyltransferase 2 (354 aa).

The Cytoplasmic segment spans residues 1 to 5 (MASAQ). A helical; Signal-anchor for type II membrane protein transmembrane segment spans residues 6–26 (VPFSFPLAHFLIFVFVTSTIT). Topologically, residues 27–354 (HLQQRIVKLQ…PADLSPLLKH (328 aa)) are lumenal. The interval 43-68 (LPMTTQMSSGNTESPEMRRDSEQHGN) is disordered. Residues 45 to 56 (MTTQMSSGNTES) show a composition bias toward polar residues. Residues 57–68 (PEMRRDSEQHGN) are compositionally biased toward basic and acidic residues. N199 carries an N-linked (GlcNAc...) asparagine glycan.

It belongs to the glycosyltransferase 11 family. Specifically expressed in gut.

It is found in the golgi apparatus. It localises to the golgi stack membrane. It carries out the reaction a beta-D-galactosyl-(1-&gt;3)-N-acetyl-beta-D-glucosaminyl derivative + GDP-beta-L-fucose = an alpha-L-Fuc-(1-&gt;2)-beta-D-Gal-(1-&gt;3)-beta-D-GlcNAc derivative + GDP + H(+). The enzyme catalyses a beta-D-galactosyl-(1-&gt;4)-N-acetyl-beta-D-glucosaminyl derivative + GDP-beta-L-fucose = an alpha-L-Fuc-(1-&gt;2)-beta-D-Gal-(1-&gt;4)-beta-D-GlcNAc derivative + GDP + H(+). The catalysed reaction is a ganglioside GM1 (d18:1(4E)) + GDP-beta-L-fucose = a ganglioside Fuc-GM1 (d18:1(4E)) + GDP + H(+). It catalyses the reaction a globoside GalGb4Cer (d18:1(4E)) + GDP-beta-L-fucose = a globoside Globo-H (d18:1(4E)) + GDP + H(+). It carries out the reaction a neolactoside nLc4Cer + GDP-beta-L-fucose = a neolactoside IV(2)-alpha-Fuc-nLc4Cer + GDP + H(+). The enzyme catalyses a neolactoside nLc4Cer(d18:1(4E)) + GDP-beta-L-fucose = a neolactoside IV(2)-alpha-Fuc-nLc4Cer(d18:1(4E)) + GDP + H(+). The catalysed reaction is a ganglioside GM1 + GDP-beta-L-fucose = a ganglioside Fuc-GM1 + GDP + H(+). It catalyses the reaction a ganglioside GA1 + GDP-beta-L-fucose = a ganglioside Fuc-GA1 + GDP + H(+). It carries out the reaction Lc4Cer + GDP-beta-L-fucose = alpha-L-fucosyl-(1-&gt;2)-beta-D-galactosyl-(1-&gt;3)-N-acetyl-beta-D-glucosaminyl-(1-&gt;3)-beta-D-galactosyl-(1-&gt;4)-beta-D-glucosyl-(1&lt;-&gt;1')-ceramide + GDP + H(+). The enzyme catalyses a beta-D-Gal-(1-&gt;3)-beta-D-GlcNAc-(1-&gt;3)-beta-D-Gal-(1-&gt;4)-beta-D-Glc-(1&lt;-&gt;1')-Cer(d18:1(4E)) + GDP-beta-L-fucose = alpha-L-fucosyl-(1-&gt;2)- beta-D-galactosyl-(1-&gt;3)-N-acetyl-beta-D-glucosaminyl-(1-&gt;3)-beta-D-galactosyl-(1-&gt;4)-beta-D-glucosyl-(1&lt;-&gt;1')-N-acylsphing-4-enine + GDP + H(+). The catalysed reaction is a ganglioside GD1b + GDP-beta-L-fucose = a ganglioside Fuc-GD1b + GDP + H(+). It catalyses the reaction a lactoside III(4)-a-Fuc-Lc4Cer + GDP-beta-L-fucose = a lactoside IV(2),III(4)-a-[Fuc]2-Lc4Cer + GDP + H(+). It carries out the reaction beta-D-galactosyl-(1-&gt;3)-N-acetyl-D-galactosamine + GDP-beta-L-fucose = alpha-L-fucosyl-(1-&gt;2)-beta-D-galactosyl-(1-&gt;3)-N-acetyl-D-galactosamine + GDP + H(+). It functions in the pathway protein modification; protein glycosylation. Catalyzes the transfer of L-fucose, from a guanosine diphosphate-beta-L-fucose, to the terminal galactose on both O- and N-linked glycans chains of cell surface glycoproteins and glycolipids and the resulting epitope regulates several processes such as cell-cell interaction including host-microbe interaction, cell surface expression and cell proliferation. Preferentially fucosylates gangliosides GA1 and GM1 in the antrum, cecum and colon and in the female reproductive organs. Fucosylated host glycoproteins or glycolipids mediate interaction with intestinal microbiota influencing its composition. Creates a soluble precursor oligosaccharide FuC-alpha ((1,2)Galbeta-) called the H antigen which is an essential substrate for the final step in the soluble ABO blood group antigen synthesis pathway. This Rattus norvegicus (Rat) protein is Galactoside alpha-(1,2)-fucosyltransferase 2.